A 766-amino-acid polypeptide reads, in one-letter code: Semaphorin-4E (766 aa).

The signal sequence occupies residues 1–24; the sequence is MMSLLAVLCVLYVWSPAMLTGGLG. At 25–664 the chain is on the extracellular side; sequence STLDSLPRKT…LHHVKEKERT (640 aa). The Sema domain occupies 27–499; it reads LDSLPRKTVP…SEVGVVQLSI (473 aa). Asn-52 carries N-linked (GlcNAc...) asparagine glycosylation. Intrachain disulfides connect Cys-100–Cys-111, Cys-129–Cys-138, Cys-261–Cys-373, and Cys-285–Cys-329. N-linked (GlcNAc...) asparagine glycosylation occurs at Asn-433. The 52-residue stretch at 501-552 folds into the PSI domain; it reads ECGRYQTCLDCVLARDPHCGWDLDTEHCATINSIHRTRSSTVIQSLNDGDAS. 2 disulfides stabilise this stretch: Cys-502-Cys-519 and Cys-511-Cys-528. Positions 555-640 constitute an Ig-like C2-type domain; the sequence is PAIGVSKPVN…QRKYQTQHVA (86 aa). 2 N-linked (GlcNAc...) asparagine glycosylation sites follow: Asn-564 and Asn-612. Residues Cys-577 and Cys-623 are joined by a disulfide bond. Residues 665–685 form a helical membrane-spanning segment; sequence LVAMVVILSLVLAALLIWNLY. The Cytoplasmic portion of the chain corresponds to 686–766; that stretch reads KGHLSLPCLH…LKYIDDESEI (81 aa). The disordered stretch occupies residues 724 to 750; that stretch reads FNSNNNHANDQRYSSSRETDRLSTTAG.

It belongs to the semaphorin family.

It is found in the membrane. The polypeptide is Semaphorin-4E (sema4e) (Danio rerio (Zebrafish)).